We begin with the raw amino-acid sequence, 96 residues long: Small ribosomal subunit protein bS6 (96 aa).

It belongs to the bacterial ribosomal protein bS6 family.

In terms of biological role, binds together with bS18 to 16S ribosomal RNA. In Bacillus thuringiensis subsp. konkukian (strain 97-27), this protein is Small ribosomal subunit protein bS6.